The primary structure comprises 271 residues: uncharacterized protein (271 aa).

The 101-residue stretch at 24–124 folds into the AB hydrolase-1 domain; sequence PIILLVHGGG…QVHVMIPHEP (101 aa).

It belongs to the AB hydrolase superfamily.

This is an uncharacterized protein from Bacillus subtilis (strain 168).